The sequence spans 245 residues: 1-(5-phosphoribosyl)-5-[(5-phosphoribosylamino)methylideneamino] imidazole-4-carboxamide isomerase (245 aa).

The active-site Proton acceptor is the Asp7. The active-site Proton donor is the Asp129.

It belongs to the HisA/HisF family.

The protein resides in the cytoplasm. It carries out the reaction 1-(5-phospho-beta-D-ribosyl)-5-[(5-phospho-beta-D-ribosylamino)methylideneamino]imidazole-4-carboxamide = 5-[(5-phospho-1-deoxy-D-ribulos-1-ylimino)methylamino]-1-(5-phospho-beta-D-ribosyl)imidazole-4-carboxamide. It participates in amino-acid biosynthesis; L-histidine biosynthesis; L-histidine from 5-phospho-alpha-D-ribose 1-diphosphate: step 4/9. The sequence is that of 1-(5-phosphoribosyl)-5-[(5-phosphoribosylamino)methylideneamino] imidazole-4-carboxamide isomerase from Pectobacterium atrosepticum (strain SCRI 1043 / ATCC BAA-672) (Erwinia carotovora subsp. atroseptica).